A 105-amino-acid polypeptide reads, in one-letter code: Protein ORFg in retron Ec67 (105 aa).

This chain is Protein ORFg in retron Ec67, found in Escherichia coli.